A 98-amino-acid chain; its full sequence is uncharacterized protein (98 aa).

A run of 2 helical transmembrane segments spans residues I2–W22 and A70–L90.

Its subcellular location is the cell membrane. This is an uncharacterized protein from Sinorhizobium fredii (strain NBRC 101917 / NGR234).